Here is a 481-residue protein sequence, read N- to C-terminus: 4-O-methyl-glucuronoyl methylesterase (481 aa).

Positions 1–21 are cleaved as a signal peptide; the sequence is MVSQTVVSSLLVVLGAAGVRA. Positions 23 to 59 constitute a CBM1 domain; that stretch reads QRQSLWGQCGGSGWSGPTLCVDGAWCNPQNQWYHQCI. 3 disulfide bridges follow: C108-C143, C292-C428, and C324-C400. The GXSYXG catalytic site motif signature appears at 291 to 296; it reads GCSRNG. S293 acts as the Nucleophile in catalysis. The substrate site is built by K297, Q339, E347, and W391. The Proton donor/acceptor role is filled by H427.

This sequence belongs to the carbohydrate esterase 15 (CE15) family.

It localises to the secreted. The enzyme catalyses a 4-O-methyl-alpha-D-glucuronosyl ester derivative + H2O = 4-O-methyl-alpha-D-glucuronate derivative + an alcohol + H(+). Functionally, glucuronoyl esterase which may play a significant role in biomass degradation, as it is considered to disconnect hemicellulose from lignin through the hydrolysis of the ester bond between 4-O-methyl-D-glucuronic acid residues of glucuronoxylans and aromatic alcohols of lignin. This Podospora anserina (strain S / ATCC MYA-4624 / DSM 980 / FGSC 10383) (Pleurage anserina) protein is 4-O-methyl-glucuronoyl methylesterase.